An 80-amino-acid polypeptide reads, in one-letter code: Exodeoxyribonuclease 7 small subunit (80 aa).

This sequence belongs to the XseB family. Heterooligomer composed of large and small subunits.

The protein resides in the cytoplasm. It carries out the reaction Exonucleolytic cleavage in either 5'- to 3'- or 3'- to 5'-direction to yield nucleoside 5'-phosphates.. Functionally, bidirectionally degrades single-stranded DNA into large acid-insoluble oligonucleotides, which are then degraded further into small acid-soluble oligonucleotides. This is Exodeoxyribonuclease 7 small subunit from Escherichia coli O6:K15:H31 (strain 536 / UPEC).